A 105-amino-acid chain; its full sequence is RxLR effector protein PITG_18670 (105 aa).

The first 21 residues, 1–21 (MRSIFYFALAFAALTCSNASA), serve as a signal peptide directing secretion. Positions 39–57 (RSLRVAGQEVARGDRGEEI) match the RxLR-dEER motif.

The protein belongs to the RxLR effector family.

It is found in the secreted. It localises to the host nucleus. Its subcellular location is the host nucleolus. The protein resides in the host cytoplasm. Effector that enhances P.infestans colonization of Nicotiana benthamiana leaves. This Phytophthora infestans (strain T30-4) (Potato late blight agent) protein is RxLR effector protein PITG_18670.